The following is a 270-amino-acid chain: ParA family protein MPN_688 (270 aa).

This sequence belongs to the ParA family.

The sequence is that of ParA family protein MPN_688 from Mycoplasma pneumoniae (strain ATCC 29342 / M129 / Subtype 1) (Mycoplasmoides pneumoniae).